Here is a 299-residue protein sequence, read N- to C-terminus: Zinc finger protein-like 1 homolog (299 aa).

The segment at 1–43 adopts a B box-type; degenerate zinc-finger fold; the sequence is MGLCKCPKRLVTNQFCFEHRVNVCEHCMVQSHPKCIVQSYLQW. The RING-type; atypical zinc-finger motif lies at 53-101; the sequence is CTLCGTTLEQGDCVRLVCYHVFHWDCLNARQAALPANTAPRGHQCPACS. The disordered stretch occupies residues 200 to 231; sequence AGDYASSRRPLLPRQSPIGGTDRDDNKYQRRT. Ser215 is subject to Phosphoserine. A helical transmembrane segment spans residues 256–276; it reads WFLVTAGILAFVLFVYLMAWL.

The protein belongs to the ZFPL1 family.

It is found in the membrane. This chain is Zinc finger protein-like 1 homolog, found in Drosophila melanogaster (Fruit fly).